Consider the following 3262-residue polypeptide: Striated muscle-specific serine/threonine-protein kinase (3262 aa).

Residues 1–33 are disordered; that stretch reads MQKARGTRGEDAGTRAPPSPGVPPKRAKVGAGR. At arginine 33 the chain carries Omega-N-methylarginine. Residues 45–126 form the Ig-like 1 domain; the sequence is PVFLRPLKNA…GQASCEAVLT (82 aa). A Phosphoserine modification is found at serine 141. Disordered regions lie at residues 155-185, 198-226, 280-720, and 814-875; these read RAFS…TSEE, EQEA…GPRH, GLHR…VSAG, and LAVR…APPT. The span at 158 to 185 shows a compositional bias: polar residues; it reads STPTGGSDTLVGTSLDTPPTSVTGTSEE. Residues 301 to 317 show a composition bias toward pro residues; it reads PALPPPSKSALLPPPSP. Phosphoserine occurs at positions 368 and 375. The residue at position 379 (threonine 379) is a Phosphothreonine. 2 positions are modified to phosphoserine: serine 382 and serine 385. Basic and acidic residues predominate over residues 404–422; it reads ILDKLQFFEERRRSLERSD. At serine 423 the chain carries Phosphoserine. A Phosphothreonine modification is found at threonine 453. A phosphoserine mark is found at serine 457, serine 463, serine 493, serine 511, and serine 531. Positions 459–473 are enriched in basic and acidic residues; it reads EELRSPRGSVAERRR. Residues 510–522 show a composition bias toward basic and acidic residues; sequence TSREELVRSHESL. Over residues 543–552 the composition is skewed to polar residues; it reads RPSTPKTSRA. Residue serine 554 is modified to Phosphoserine. Composition is skewed to basic and acidic residues over residues 624–638 and 663–680; these read PESR…KREP and EKNR…RGPE. Positions 727 to 815 constitute an Ig-like 2 domain; that stretch reads PVFEIPLQNM…GQATCASSLA (89 aa). The segment covering 820-830 has biased composition (polar residues); it reads GSTSPFSSPIT. Ig-like domains are found at residues 874–963, 968–1062, and 1069–1157; these read PTFK…ARLE, PESR…ARLT, and PLFT…AQLY. Residues cysteine 994 and cysteine 1046 are joined by a disulfide bond. Serine 1133 and serine 1177 each carry phosphoserine. The segment at 1162-1185 is disordered; it reads RTAASGPSSKLEKMPSIPEEPEHG. Residues 1193–1283 form the Ig-like 6 domain; that stretch reads PDFLRPLQDL…AACYAHLYVT (91 aa). A Fibronectin type-III 1 domain is found at 1290 to 1387; it reads PDGAPEVVAV…PSEPVQLLEH (98 aa). Ig-like domains lie at 1389-1485 and 1490-1578; these read PPLE…VTLE and PRFE…AELS. Cysteine 1413 and cysteine 1469 are oxidised to a cystine. The 254-residue stretch at 1606 to 1859 folds into the Protein kinase 1 domain; it reads YDIHQEIGRG…AEETLEHPWF (254 aa). ATP-binding positions include 1612-1620 and lysine 1635; that span reads IGRGAFSYL. Aspartate 1724 functions as the Proton acceptor in the catalytic mechanism. The interval 1913-2571 is disordered; sequence MPRRQPPSGG…SQPNLSSSVQ (659 aa). Residues 1918–1927 show a composition bias toward low complexity; sequence PPSGGLSSSS. Residues 1980-1990 are compositionally biased toward basic and acidic residues; sequence EQERTPSKDQE. Phosphoserine occurs at positions 1993, 2004, 2019, 2020, and 2042. Basic and acidic residues predominate over residues 2009–2019; sequence SPRRPELRRGS. An Asymmetric dimethylarginine; alternate modification is found at arginine 2060. Omega-N-methylarginine; alternate is present on arginine 2060. Over residues 2069–2081 the composition is skewed to low complexity; sequence AQRLQALRQRLLR. Serine 2114 and serine 2135 each carry phosphoserine. Residue arginine 2144 is modified to Omega-N-methylarginine. Positions 2168 to 2179 are enriched in polar residues; sequence ESPSLSALSETQ. A phosphoserine mark is found at serine 2182 and serine 2207. A compositionally biased stretch (polar residues) spans 2193–2207; it reads ITKSPEPSAVTSRDS. Over residues 2208 to 2218 the composition is skewed to pro residues; that stretch reads PQPPEPQPVPE. A compositionally biased stretch (basic and acidic residues) spans 2219-2229; it reads KVPEPKPEPVR. A compositionally biased stretch (low complexity) spans 2230–2268; sequence AAKPAQPPLALQMPTQPLTPYAQIMQSLQLSSPTLSPQD. Over residues 2337 to 2348 the composition is skewed to basic and acidic residues; it reads FEAKFKRSRESP. Residues 2349–2358 are compositionally biased toward low complexity; that stretch reads LSRGLRLLSR. Residues 2359 to 2375 are compositionally biased toward basic and acidic residues; that stretch reads SRSEERGPFRGAEDDGI. Serine 2379 carries the post-translational modification Phosphoserine. Threonine 2383 is subject to Phosphothreonine. A compositionally biased stretch (basic and acidic residues) spans 2387–2398; the sequence is LVRRPERSRSVQ. Phosphoserine occurs at positions 2413, 2417, 2441, 2442, 2447, and 2451. Low complexity predominate over residues 2461-2487; the sequence is SSTLERLSSRLQRSGSSEDSGGASGRS. Polar residues predominate over residues 2513–2523; sequence QLGSQTGATTP. Residues serine 2524 and serine 2527 each carry the phosphoserine modification. A compositionally biased stretch (low complexity) spans 2524-2543; that stretch reads SAESLGSEASGTSGSSAPGE. The span at 2546-2557 shows a compositional bias: basic residues; it reads SRHRWGLSRLRK. At serine 2562 the chain carries Phosphoserine. A compositionally biased stretch (polar residues) spans 2562–2571; that stretch reads SQPNLSSSVQ. The 91-residue stretch at 2586 to 2676 folds into the Ig-like 9 domain; the sequence is PPVFHIKLKD…GSITSSCTVA (91 aa). A disulfide bond links cysteine 2608 and cysteine 2660. The 95-residue stretch at 2683-2777 folds into the Fibronectin type-III 2 domain; sequence KLAPPEVPQT…KVFIRGTPDS (95 aa). Disordered stretches follow at residues 2756–2832, 2857–2899, and 2912–2960; these read RAGQ…MSAN, ATQQ…PAPS, and APPA…PQKP. Threonine 2774 carries the phosphothreonine modification. Low complexity-rich tracts occupy residues 2775 to 2789 and 2803 to 2831; these read PDSP…RDAP and PTSL…SMSA. Serine 2777 carries the phosphoserine modification. A Fibronectin type-III 3 domain is found at 2865–2968; sequence PPSIVVTPSE…KPYTFLEEKA (104 aa). Residues 2883-2899 are compositionally biased toward polar residues; the sequence is GTLTPTSSPQGVKPAPS. Residues 2913-2927 show a composition bias toward pro residues; that stretch reads PPAPQAPAPEPPPEP. A compositionally biased stretch (polar residues) spans 2943 to 2953; that stretch reads SSPTPESTTLR. Phosphoserine is present on serine 2944. The Protein kinase 2 domain maps to 2946–3213; it reads TPESTTLRQG…LQDCLAHPWL (268 aa). The active-site Proton acceptor is aspartate 3080.

The protein belongs to the protein kinase superfamily. CAMK Ser/Thr protein kinase family. In terms of assembly, interacts with MTM1. Isoform 3 is found as a monomer or homodimer. May be autophosphorylated. As to expression, isoform 1 is preferentially expressed in striated muscle. Non-kinase form such as isoform 3 is predominantly expressed in the aorta. Isoform 3 appears to be expressed only in highly differentiated ASMC in normal vessel walls and down-regulated in dedifferentiated ASMC in vivo. In response to vascular injuries ASMC dedifferentiate and change from a quiescent and contractile phenotype to a proliferative and synthetic phenotype. This proliferation of vascular smooth muscle cells is one of the most prominent features of atherosclerosis. Isoform 1 and isoform 4 are expressed in cardiomyocytes of the developing heart.

The protein resides in the nucleus. It catalyses the reaction L-seryl-[protein] + ATP = O-phospho-L-seryl-[protein] + ADP + H(+). The enzyme catalyses L-threonyl-[protein] + ATP = O-phospho-L-threonyl-[protein] + ADP + H(+). Functionally, isoform 3 may have a role in regulating the growth and differentiation of arterial smooth muscle cells. The sequence is that of Striated muscle-specific serine/threonine-protein kinase (Speg) from Mus musculus (Mouse).